The primary structure comprises 101 residues: Small ribosomal subunit protein bS18c (101 aa).

Belongs to the bacterial ribosomal protein bS18 family. Part of the 30S ribosomal subunit.

It is found in the plastid. The protein localises to the chloroplast. The sequence is that of Small ribosomal subunit protein bS18c from Aethionema cordifolium (Lebanon stonecress).